Reading from the N-terminus, the 298-residue chain is GTP cyclohydrolase FolE2 (298 aa).

This sequence belongs to the GTP cyclohydrolase IV family.

The enzyme catalyses GTP + H2O = 7,8-dihydroneopterin 3'-triphosphate + formate + H(+). It participates in cofactor biosynthesis; 7,8-dihydroneopterin triphosphate biosynthesis; 7,8-dihydroneopterin triphosphate from GTP: step 1/1. In terms of biological role, converts GTP to 7,8-dihydroneopterin triphosphate. This is GTP cyclohydrolase FolE2 from Neisseria meningitidis serogroup B (strain ATCC BAA-335 / MC58).